The chain runs to 383 residues: Putative glutamate--cysteine ligase 2-2 (383 aa).

The protein belongs to the glutamate--cysteine ligase type 2 family. YbdK subfamily.

The catalysed reaction is L-cysteine + L-glutamate + ATP = gamma-L-glutamyl-L-cysteine + ADP + phosphate + H(+). Its function is as follows. ATP-dependent carboxylate-amine ligase which exhibits weak glutamate--cysteine ligase activity. This chain is Putative glutamate--cysteine ligase 2-2, found in Legionella pneumophila (strain Lens).